We begin with the raw amino-acid sequence, 418 residues long: UDP-N-acetylglucosamine 1-carboxyvinyltransferase (418 aa).

Position 22 to 23 (22 to 23 (KN)) interacts with phosphoenolpyruvate. Arginine 92 serves as a coordination point for UDP-N-acetyl-alpha-D-glucosamine. The active-site Proton donor is cysteine 116. Cysteine 116 carries the 2-(S-cysteinyl)pyruvic acid O-phosphothioketal modification. Aspartate 306 and isoleucine 328 together coordinate UDP-N-acetyl-alpha-D-glucosamine.

The protein belongs to the EPSP synthase family. MurA subfamily.

The protein localises to the cytoplasm. It carries out the reaction phosphoenolpyruvate + UDP-N-acetyl-alpha-D-glucosamine = UDP-N-acetyl-3-O-(1-carboxyvinyl)-alpha-D-glucosamine + phosphate. It functions in the pathway cell wall biogenesis; peptidoglycan biosynthesis. Its function is as follows. Cell wall formation. Adds enolpyruvyl to UDP-N-acetylglucosamine. This Solibacter usitatus (strain Ellin6076) protein is UDP-N-acetylglucosamine 1-carboxyvinyltransferase.